Reading from the N-terminus, the 671-residue chain is DNA ligase (671 aa).

NAD(+)-binding positions include 32-36, 81-82, and Glu-113; these read DAEYD and SL. Lys-115 functions as the N6-AMP-lysine intermediate in the catalytic mechanism. NAD(+) contacts are provided by Arg-136, Glu-173, Lys-290, and Lys-314. Zn(2+)-binding residues include Cys-408, Cys-411, Cys-426, and Cys-432. Residues 593–671 enclose the BRCT domain; it reads EIDSPFAGKT…EAEMIRLLGA (79 aa).

The protein belongs to the NAD-dependent DNA ligase family. LigA subfamily. The cofactor is Mg(2+). Mn(2+) is required as a cofactor.

It catalyses the reaction NAD(+) + (deoxyribonucleotide)n-3'-hydroxyl + 5'-phospho-(deoxyribonucleotide)m = (deoxyribonucleotide)n+m + AMP + beta-nicotinamide D-nucleotide.. Functionally, DNA ligase that catalyzes the formation of phosphodiester linkages between 5'-phosphoryl and 3'-hydroxyl groups in double-stranded DNA using NAD as a coenzyme and as the energy source for the reaction. It is essential for DNA replication and repair of damaged DNA. This chain is DNA ligase, found in Salmonella paratyphi A (strain ATCC 9150 / SARB42).